We begin with the raw amino-acid sequence, 346 residues long: MEDLQLVLFVLGAIAIVAVLVHGFWSIRRQQPKSLKDSPMGNFYKKQAERGEGAPKRVDADGFDADGIGAVRVRKANEAHTPEAPAFNPYLKQEAKAQPQPVEPVQVEPKPLFKQEPSMAQPDFSLQSPTAKEQHRGPKASRQEPVLPGHSANLAQAHVGQSHAAMVAQKAAEEQRAQVQMPTQTALFDEEEAYEEEQPQVVEQPDDDLGEPRDVLVLHVVAKEGQQLNGAELLPCFLTLNFKYGDMNIFHRHVDNAGNGKVLFSIANMVKPGFFDPDNMEQFSTQGVVFFMTLPCYGDALMNFSIMLNSARQLADDIDAVVLDGQRQPWGEFTKQDYLHRIRANA.

The Periplasmic portion of the chain corresponds to 1–6; that stretch reads MEDLQL. Residues 7–27 traverse the membrane as a helical segment; that stretch reads VLFVLGAIAIVAVLVHGFWSI. Topologically, residues 28–346 are cytoplasmic; it reads RRQQPKSLKD…DYLHRIRANA (319 aa). Positions 116 to 146 are disordered; the sequence is EPSMAQPDFSLQSPTAKEQHRGPKASRQEPV.

It belongs to the ZipA family. As to quaternary structure, interacts with FtsZ via their C-terminal domains.

It localises to the cell inner membrane. Essential cell division protein that stabilizes the FtsZ protofilaments by cross-linking them and that serves as a cytoplasmic membrane anchor for the Z ring. Also required for the recruitment to the septal ring of downstream cell division proteins. In Shewanella sp. (strain ANA-3), this protein is Cell division protein ZipA.